The primary structure comprises 500 residues: Hexokinase-3 (500 aa).

The helical transmembrane segment at Val-4–Val-24 threads the bilayer. The Hexokinase domain maps to Arg-35–Ala-487. The tract at residues Ser-90–Val-222 is hexokinase small subdomain. Residues Gly-104, Thr-105, and Asn-106 each coordinate ADP. Residues Thr-188, Lys-189, Asn-223, and Asp-224 each contribute to the D-glucose site. The tract at residues Asn-223–Asp-476 is hexokinase large subdomain. Ser-247 lines the ADP pocket. D-glucose is bound by residues Asn-250, Glu-278, and Glu-309. Gly-441 provides a ligand contact to ADP.

This sequence belongs to the hexokinase family. As to expression, expressed in roots, leaves, flowers, immature seeds and seed coat. Expressed in young shoots, tiller buds, endosperm seven days after fertilization, and interconnecting tissues such as pulvini and nodes.

Its subcellular location is the mitochondrion outer membrane. The catalysed reaction is a D-hexose + ATP = a D-hexose 6-phosphate + ADP + H(+). It catalyses the reaction D-fructose + ATP = D-fructose 6-phosphate + ADP + H(+). It carries out the reaction D-glucose + ATP = D-glucose 6-phosphate + ADP + H(+). It participates in carbohydrate metabolism; hexose metabolism. Its pathway is carbohydrate degradation; glycolysis; D-glyceraldehyde 3-phosphate and glycerone phosphate from D-glucose: step 1/4. Functionally, fructose and glucose phosphorylating enzyme. Involved in the regulation of cell expansion in spikelet hulls, grain size, and gibberellin biosynthesis and homeostasis. This is Hexokinase-3 from Oryza sativa subsp. japonica (Rice).